The following is a 407-amino-acid chain: Lysosomal phospholipase A and acyltransferase (407 aa).

The N-terminal stretch at 1 to 29 is a signal peptide; that stretch reads MGCLCLYRSTLLTGGLLFLLMLADPAFPA. Asp41 is a binding site for substrate. Cys60 and Cys84 are disulfide-bonded. N-linked (GlcNAc...) asparagine glycosylation occurs at Asn94. Ser193 (acyl-ester intermediate) is an active-site residue. A Zn(2+)-binding site is contributed by Ser193. Residue Met194 coordinates substrate. N-linked (GlcNAc...) asparagine glycosylation is present at Asn284. Catalysis depends on charge relay system residues Asp355 and His387. Residue His387 participates in Zn(2+) binding. Asn393 carries an N-linked (GlcNAc...) asparagine glycan.

Belongs to the AB hydrolase superfamily. Lipase family. N-glycosylated. Post-translationally, N-glycosylated. N-glycosylation is important for maturation of the enzyme and normal subcellular location. As to expression, detected in brain (at protein level).

The protein localises to the lysosome. The protein resides in the secreted. It is found in the membrane. The catalysed reaction is a 1,2-diacyl-sn-glycero-3-phosphocholine + H2O = a 2-acyl-sn-glycero-3-phosphocholine + a fatty acid + H(+). It catalyses the reaction 1-hexadecanoyl-2-(9Z-octadecenoyl)-sn-glycero-3-phosphocholine + H2O = 2-(9Z-octadecenoyl)-sn-glycero-3-phosphocholine + hexadecanoate + H(+). It carries out the reaction 1,2-di-(9Z-octadecenoyl)-sn-glycero-3-phosphocholine + H2O = 2-(9Z-octadecenoyl)-sn-glycero-3-phosphocholine + (9Z)-octadecenoate + H(+). The enzyme catalyses 1-hexadecanoyl-2-glutaroyl-sn-glycero-3-phosphocholine + H2O = 2-glutaroyl-sn-glycero-3-phosphocholine + hexadecanoate + H(+). The catalysed reaction is 1-hexadecanoyl-2-nonadioyl-sn-glycero-3-phosphocholine + H2O = 2-nonadioyl-sn-glycero-3-phosphocholine + hexadecanoate + H(+). It catalyses the reaction 1-hexadecanoyl-2-(5-oxopentanoyl)-sn-glycero-3-phosphocholine + H2O = 2-(5-oxopentanoyl)-sn-glycero-3-phosphocholine + hexadecanoate + H(+). It carries out the reaction 1-hexadecanoyl-2-(9-oxononanoyl)-sn-glycero-3-phosphocholine + H2O = 2-(9-oxononanoyl)-sn-glycero-3-phosphocholine + hexadecanoate + H(+). The enzyme catalyses 1,2-dihexadecanoyl-sn-glycero-3-phosphocholine + H2O = 2-hexadecanoyl-sn-glycero-3-phosphocholine + hexadecanoate + H(+). The catalysed reaction is a 1,2-diacyl-sn-glycero-3-phosphocholine + H2O = a 1-acyl-sn-glycero-3-phosphocholine + a fatty acid + H(+). It catalyses the reaction 1-hexadecanoyl-2-(9Z-octadecenoyl)-sn-glycero-3-phosphocholine + H2O = 1-hexadecanoyl-sn-glycero-3-phosphocholine + (9Z)-octadecenoate + H(+). It carries out the reaction 1,2-di-(9Z-octadecenoyl)-sn-glycero-3-phosphocholine + H2O = 1-(9Z-octadecenoyl)-sn-glycero-3-phosphocholine + (9Z)-octadecenoate + H(+). The enzyme catalyses 1,2-dihexadecanoyl-sn-glycero-3-phosphocholine + H2O = 1-hexadecanoyl-sn-glycero-3-phosphocholine + hexadecanoate + H(+). The catalysed reaction is a 1-acyl-sn-glycero-3-phosphocholine + H2O = sn-glycerol 3-phosphocholine + a fatty acid + H(+). It catalyses the reaction 1-hexadecanoyl-sn-glycero-3-phosphocholine + H2O = sn-glycerol 3-phosphocholine + hexadecanoate + H(+). It carries out the reaction N-(acetyl)-sphing-4-enine + a 1,2-diacyl-sn-glycero-3-phosphoethanolamine = 1-O-acyl-N-(acetyl)-sphing-4-enine + a 2-acyl-sn-glycero-3-phosphoethanolamine. The enzyme catalyses 1-hexadecanoyl-2-(9Z-octadecenoyl)-sn-glycero-3-phosphoethanolamine + N-(acetyl)-sphing-4-enine = 2-(9Z-octadecenoyl)-sn-glycero-3-phosphoethanolamine + 1-hexadecanoyl-N-(acetyl)-sphing-4-enine. The catalysed reaction is 1-hexadecanoyl-2-(9Z,12Z-octadecadienoyl)-sn-glycero-3-phosphoethanolamine + N-(acetyl)-sphing-4-enine = 2-(9Z,12Z)-octadecadienoyl-sn-glycero-3-phosphoethanolamine + 1-hexadecanoyl-N-(acetyl)-sphing-4-enine. It catalyses the reaction 1-hexadecanoyl-2-(5Z,8Z,11Z,14Z-eicosatetraenoyl)-sn-glycero-3-phosphoethanolamine + N-(acetyl)-sphing-4-enine = 2-(5Z,8Z,11Z,14Z)-eicosatetraenoyl-sn-glycero-3-phosphoethanolamine + 1-hexadecanoyl-N-(acetyl)-sphing-4-enine. It carries out the reaction N-(acetyl)-sphing-4-enine + a 1,2-diacyl-sn-glycero-3-phosphoethanolamine = 1-O-acyl-N-(acetyl)-sphing-4-enine + a 1-acyl-sn-glycero-3-phosphoethanolamine. The enzyme catalyses 1-hexadecanoyl-2-(9Z-octadecenoyl)-sn-glycero-3-phosphoethanolamine + N-(acetyl)-sphing-4-enine = 1-(9Z-octadecenoyl)-N-(acetyl)-sphing-4-enine + 1-hexadecanoyl-sn-glycero-3-phosphoethanolamine. The catalysed reaction is 1-hexadecanoyl-2-(9Z,12Z-octadecadienoyl)-sn-glycero-3-phosphoethanolamine + N-(acetyl)-sphing-4-enine = 1-(9Z,12Z-octadecadienoyl)-N-acetylsphing-4-enine + 1-hexadecanoyl-sn-glycero-3-phosphoethanolamine. It catalyses the reaction 1-hexadecanoyl-2-(5Z,8Z,11Z,14Z-eicosatetraenoyl)-sn-glycero-3-phosphoethanolamine + N-(acetyl)-sphing-4-enine = 1-(5Z,8Z,11Z,14Z)-eicosatetraenoyl-N-(acetyl)-sphing-4-enine + 1-hexadecanoyl-sn-glycero-3-phosphoethanolamine. It carries out the reaction N-(acetyl)-sphing-4-enine + a 1,2-diacyl-sn-glycero-3-phosphocholine = 1-O-acyl-N-(acetyl)-sphing-4-enine + a 2-acyl-sn-glycero-3-phosphocholine. The enzyme catalyses 1-hexadecanoyl-2-(9Z-octadecenoyl)-sn-glycero-3-phosphocholine + N-(acetyl)-sphing-4-enine = 1-hexadecanoyl-N-(acetyl)-sphing-4-enine + 2-(9Z-octadecenoyl)-sn-glycero-3-phosphocholine. The catalysed reaction is 1-hexadecanoyl-2-(9Z,12Z-octadecadienoyl)-sn-glycero-3-phosphocholine + N-(acetyl)-sphing-4-enine = 2-(9Z,12Z-octadecadienoyl)-sn-glycero-3-phosphocholine + 1-hexadecanoyl-N-(acetyl)-sphing-4-enine. It catalyses the reaction 1-hexadecanoyl-2-(5Z,8Z,11Z,14Z-eicosatetraenoyl)-sn-glycero-3-phosphocholine + N-(acetyl)-sphing-4-enine = 1-hexadecanoyl-N-(acetyl)-sphing-4-enine + 2-(5Z,8Z,11Z,14Z)-eicosatetraenoyl-sn-glycero-3-phosphocholine. It carries out the reaction 1-hexadecanoyl-2-(4Z,7Z,10Z,13Z,16Z,19Z-docosahexaenoyl)-sn-glycero-3-phosphocholine + N-(acetyl)-sphing-4-enine = 2-(4Z,7Z,10Z,13Z,16Z,19Z-docosahexaenoyl)-sn-glycero-3-phosphocholine + 1-hexadecanoyl-N-(acetyl)-sphing-4-enine. The enzyme catalyses 1-hexadecanoyl-2-nonadioyl-sn-glycero-3-phosphocholine + N-(acetyl)-sphing-4-enine = 2-nonadioyl-sn-glycero-3-phosphocholine + 1-hexadecanoyl-N-(acetyl)-sphing-4-enine. The catalysed reaction is 1-octadecanoyl-2-(9Z-octadecenoyl)-sn-glycero-3-phosphocholine + N-(acetyl)-sphing-4-enine = 1-octadecanoyl-N-(acetyl)-sphing-4-enine + 2-(9Z-octadecenoyl)-sn-glycero-3-phosphocholine. It catalyses the reaction 1-(9Z)-octadecenoyl-2-octadecanoyl-sn-glycero-3-phosphocholine + N-(acetyl)-sphing-4-enine = 2-octadecanoyl-sn-glycero-3-phosphocholine + 1-(9Z-octadecenoyl)-N-(acetyl)-sphing-4-enine. It carries out the reaction 1-octadecanoyl-2-(5Z,8Z,11Z,14Z-eicosatetraenoyl)-sn-glycero-3-phosphocholine + N-(acetyl)-sphing-4-enine = 1-octadecanoyl-N-(acetyl)-sphing-4-enine + 2-(5Z,8Z,11Z,14Z)-eicosatetraenoyl-sn-glycero-3-phosphocholine. The enzyme catalyses 1-(9Z-octadecenoyl)-2-hexadecanoyl-sn-glycero-3-phosphocholine + N-(acetyl)-sphing-4-enine = 1-(9Z-octadecenoyl)-N-(acetyl)-sphing-4-enine + 2-hexadecanoyl-sn-glycero-3-phosphocholine. The catalysed reaction is N-(acetyl)-sphing-4-enine + a 1,2-diacyl-sn-glycero-3-phosphocholine = 1-O-acyl-N-(acetyl)-sphing-4-enine + a 1-acyl-sn-glycero-3-phosphocholine. It catalyses the reaction 1-hexadecanoyl-2-(9Z-octadecenoyl)-sn-glycero-3-phosphocholine + N-(acetyl)-sphing-4-enine = 1-(9Z-octadecenoyl)-N-(acetyl)-sphing-4-enine + 1-hexadecanoyl-sn-glycero-3-phosphocholine. It carries out the reaction 1-hexadecanoyl-2-(9Z,12Z-octadecadienoyl)-sn-glycero-3-phosphocholine + N-(acetyl)-sphing-4-enine = 1-(9Z,12Z-octadecadienoyl)-N-acetylsphing-4-enine + 1-hexadecanoyl-sn-glycero-3-phosphocholine. The enzyme catalyses 1-hexadecanoyl-2-(5Z,8Z,11Z,14Z-eicosatetraenoyl)-sn-glycero-3-phosphocholine + N-(acetyl)-sphing-4-enine = 1-(5Z,8Z,11Z,14Z)-eicosatetraenoyl-N-(acetyl)-sphing-4-enine + 1-hexadecanoyl-sn-glycero-3-phosphocholine. The catalysed reaction is 1-hexadecanoyl-2-(4Z,7Z,10Z,13Z,16Z,19Z-docosahexaenoyl)-sn-glycero-3-phosphocholine + N-(acetyl)-sphing-4-enine = 1-(4Z,7Z,10Z,13Z,16Z,19Z-docosahexaenoyl)-N-(acetyl)-sphing-4-enine + 1-hexadecanoyl-sn-glycero-3-phosphocholine. It catalyses the reaction 1-octadecanoyl-2-(9Z-octadecenoyl)-sn-glycero-3-phosphocholine + N-(acetyl)-sphing-4-enine = 1-(9Z-octadecenoyl)-N-(acetyl)-sphing-4-enine + 1-octadecanoyl-sn-glycero-3-phosphocholine. It carries out the reaction 1-octadecanoyl-2-(9Z,12Z)-octadecadienoyl-sn-glycero-3-phosphocholine + N-(acetyl)-sphing-4-enine = 1-(9Z,12Z-octadecadienoyl)-N-acetylsphing-4-enine + 1-octadecanoyl-sn-glycero-3-phosphocholine. The enzyme catalyses 1-(9Z-octadecenoyl)-2-hexadecanoyl-sn-glycero-3-phosphocholine + N-(acetyl)-sphing-4-enine = 1-hexadecanoyl-N-(acetyl)-sphing-4-enine + 1-(9Z-octadecenoyl)-sn-glycero-3-phosphocholine. The catalysed reaction is 1-(9Z)-octadecenoyl-2-octadecanoyl-sn-glycero-3-phosphocholine + N-(acetyl)-sphing-4-enine = 1-octadecanoyl-N-(acetyl)-sphing-4-enine + 1-(9Z-octadecenoyl)-sn-glycero-3-phosphocholine. It catalyses the reaction 1,2-di-(9Z-octadecenoyl)-sn-glycero-3-phosphocholine + N-(acetyl)-sphing-4-enine = 1-(9Z-octadecenoyl)-N-(acetyl)-sphing-4-enine + 1-(9Z-octadecenoyl)-sn-glycero-3-phosphocholine. It carries out the reaction 1-octadecanoyl-2-(5Z,8Z,11Z,14Z-eicosatetraenoyl)-sn-glycero-3-phosphocholine + N-(acetyl)-sphing-4-enine = 1-(5Z,8Z,11Z,14Z)-eicosatetraenoyl-N-(acetyl)-sphing-4-enine + 1-octadecanoyl-sn-glycero-3-phosphocholine. The enzyme catalyses a 1,2-diacyl-sn-glycero-3-phospho-L-serine + N-(acetyl)-sphing-4-enine = a 2-acyl-sn-glycero-3-phospho-L-serine + 1-O-acyl-N-(acetyl)-sphing-4-enine. The catalysed reaction is 1-octadecanoyl-2-(9Z-octadecenoyl)-sn-glycero-3-phospho-L-serine + N-(acetyl)-sphing-4-enine = 2-(9Z-octadecenoyl)-sn-glycero-3-phospho-L-serine + 1-octadecanoyl-N-(acetyl)-sphing-4-enine. It catalyses the reaction a 1,2-diacyl-sn-glycero-3-phospho-L-serine + N-(acetyl)-sphing-4-enine = 1-O-acyl-N-(acetyl)-sphing-4-enine + a 1-acyl-sn-glycero-3-phospho-L-serine. It carries out the reaction 1-octadecanoyl-2-(9Z-octadecenoyl)-sn-glycero-3-phospho-L-serine + N-(acetyl)-sphing-4-enine = 1-octadecanoyl-sn-glycero-3-phosphoserine + 1-(9Z-octadecenoyl)-N-(acetyl)-sphing-4-enine. The enzyme catalyses a 1,2-diacyl-sn-glycero-3-phospho-(1'-sn-glycerol) + N-(acetyl)-sphing-4-enine = 2-acyl-sn-glycero-3-phospho-(1'-sn-glycerol) + 1-O-acyl-N-(acetyl)-sphing-4-enine. The catalysed reaction is 1-octadecanoyl-2-(9Z-octadecenoyl)-sn-glycero-3-phospho-(1'-sn-glycerol) + N-(acetyl)-sphing-4-enine = 2-(9Z-octadecenoyl)-sn-glycero-3-phospho-(1'-sn-glycerol) + 1-octadecanoyl-N-(acetyl)-sphing-4-enine. It catalyses the reaction a 1,2-diacyl-sn-glycero-3-phospho-(1'-sn-glycerol) + N-(acetyl)-sphing-4-enine = 1-O-acyl-N-(acetyl)-sphing-4-enine + 1-acyl-sn-glycero-3-phospho-(1'-sn-glycerol). It carries out the reaction 1-octadecanoyl-2-(9Z-octadecenoyl)-sn-glycero-3-phospho-(1'-sn-glycerol) + N-(acetyl)-sphing-4-enine = 1-octadecanoyl-sn-glycero-3-phospho-(1'-sn-glycerol) + 1-(9Z-octadecenoyl)-N-(acetyl)-sphing-4-enine. The enzyme catalyses an N-acylethanolamine + a 1,2-diacyl-sn-glycero-3-phosphocholine = 2-(acylamino)ethyl fatty acid + a 2-acyl-sn-glycero-3-phosphocholine. The catalysed reaction is an N-acylethanolamine + a 1,2-diacyl-sn-glycero-3-phosphocholine = 2-(acylamino)ethyl fatty acid + a 1-acyl-sn-glycero-3-phosphocholine. It catalyses the reaction N-(5Z,8Z,11Z,14Z-eicosatetraenoyl)-ethanolamine + 1,2-di-(9Z-octadecenoyl)-sn-glycero-3-phosphocholine = 2-[(5Z,8Z,11Z,14Z)-eicosatetraenoylamino]ethyl (9Z)-octadecenoate + (9Z-octadecenoyl)-sn-glycero-3-phosphocholine. It carries out the reaction N-(9Z-octadecenoyl) ethanolamine + 1,2-di-(9Z-octadecenoyl)-sn-glycero-3-phosphocholine = 2-[(9Z)-octadecenoylamino]ethyl (9Z)-octadecenoate + (9Z-octadecenoyl)-sn-glycero-3-phosphocholine. The enzyme catalyses a 3-acyl-sn-glycerol + a 1,2-diacyl-sn-glycero-3-phosphocholine = a 1,3-diacylglycerol + a 1-acyl-sn-glycero-3-phosphocholine. The catalysed reaction is a 3-acyl-sn-glycerol + a 1,2-diacyl-sn-glycero-3-phosphocholine = a 1,3-diacylglycerol + a 2-acyl-sn-glycero-3-phosphocholine. It catalyses the reaction 3-(9Z-octadecenoyl)-sn-glycerol + 1,2-di-(9Z-octadecenoyl)-sn-glycero-3-phosphocholine = 1,3-di-(9Z-octadecenoyl)-glycerol + (9Z-octadecenoyl)-sn-glycero-3-phosphocholine. It carries out the reaction 3-hexadecanoyl-sn-glycerol + 1,2-di-(9Z-octadecenoyl)-sn-glycero-3-phosphocholine = 1-(9Z)-octadecenoyl-3-hexadecanoyl-sn-glycerol + (9Z-octadecenoyl)-sn-glycero-3-phosphocholine. The enzyme catalyses a 1-acyl-sn-glycerol + a 1,2-diacyl-sn-glycero-3-phosphocholine = a 1,3-diacylglycerol + a 2-acyl-sn-glycero-3-phosphocholine. The catalysed reaction is a 1-acyl-sn-glycerol + a 1,2-diacyl-sn-glycero-3-phosphocholine = a 1,3-diacylglycerol + a 1-acyl-sn-glycero-3-phosphocholine. It catalyses the reaction 1-(9Z-octadecenoyl)-sn-glycerol + 1,2-di-(9Z-octadecenoyl)-sn-glycero-3-phosphocholine = 1,3-di-(9Z-octadecenoyl)-glycerol + (9Z-octadecenoyl)-sn-glycero-3-phosphocholine. It carries out the reaction 1-hexadecanoyl-sn-glycerol + 1,2-di-(9Z-octadecenoyl)-sn-glycero-3-phosphocholine = 1-hexadecanoyl-3-(9Z)-octadecenoyl-sn-glycerol + (9Z-octadecenoyl)-sn-glycero-3-phosphocholine. The enzyme catalyses a 2-acylglycerol + a 1,2-diacyl-sn-glycero-3-phosphocholine = a 1,2-diacylglycerol + a 2-acyl-sn-glycero-3-phosphocholine. The catalysed reaction is a 2-acylglycerol + a 1,2-diacyl-sn-glycero-3-phosphocholine = a 1,2-diacylglycerol + a 1-acyl-sn-glycero-3-phosphocholine. It catalyses the reaction 2-hexadecanoylglycerol + 1,2-di-(9Z-octadecenoyl)-sn-glycero-3-phosphocholine = 1-(9Z)-octadecenoyl-2-hexadecanoylglycerol + (9Z-octadecenoyl)-sn-glycero-3-phosphocholine. It carries out the reaction 1-O-alkylglycerol + a 1,2-diacyl-sn-glycero-3-phosphocholine = 1-O-alkyl-3-acylglycerol + a 1-acyl-sn-glycero-3-phosphocholine. The enzyme catalyses 1-O-alkylglycerol + a 1,2-diacyl-sn-glycero-3-phosphocholine = 1-O-alkyl-3-acylglycerol + a 2-acyl-sn-glycero-3-phosphocholine. The catalysed reaction is 1-O-hexadecylglycerol + 1,2-di-(9Z-octadecenoyl)-sn-glycero-3-phosphocholine = 1-O-hexadecyl-3-(9Z)-octadecenoylglycerol + (9Z-octadecenoyl)-sn-glycero-3-phosphocholine. It catalyses the reaction 1-O-alkyl-2-acyl-sn-glycerol + a 1,2-diacyl-sn-glycero-3-phosphocholine = 1-O-alkyl-2,3-diacyl-sn-glycerol + a 2-acyl-sn-glycero-3-phosphocholine. It carries out the reaction 1-O-alkyl-2-acyl-sn-glycerol + a 1,2-diacyl-sn-glycero-3-phosphocholine = 1-O-alkyl-2,3-diacyl-sn-glycerol + a 1-acyl-sn-glycero-3-phosphocholine. The enzyme catalyses 1-O-hexadecyl-2-acetyl-sn-glycerol + 1,2-di-(9Z-octadecenoyl)-sn-glycero-3-phosphocholine = 1-O-hexadecyl-2-acetyl-3-(9Z)-octadecenoyl-sn-glycerol + (9Z-octadecenoyl)-sn-glycero-3-phosphocholine. The catalysed reaction is 1-O-hexadecyl-2-O-methyl-sn-glycerol + 1,2-di-(9Z-octadecenoyl)-sn-glycero-3-phosphocholine = 1-O-hexadecyl-2-O-methyl-3-(9Z)-octadecenoyl-sn-glycerol + (9Z-octadecenoyl)-sn-glycero-3-phosphocholine. It catalyses the reaction a 1,2-diacyl-sn-glycero-3-phosphoethanolamine + H2O = a 1-acyl-sn-glycero-3-phosphoethanolamine + a fatty acid + H(+). It carries out the reaction 1-acyl-2-(5Z,8Z,11Z,14Z)-eicosatetraenoyl-sn-glycero-3-phosphoethanolamine + H2O = a 1-acyl-sn-glycero-3-phosphoethanolamine + (5Z,8Z,11Z,14Z)-eicosatetraenoate + H(+). The enzyme catalyses a 1,2-diacyl-sn-glycero-3-phospho-(1'-sn-glycerol) + H2O = 1-acyl-sn-glycero-3-phospho-(1'-sn-glycerol) + a fatty acid + H(+). The catalysed reaction is 1-hexadecanoyl-2-(9Z-octadecenoyl)-sn-glycero-3-phospho-(1'-sn-glycerol) + H2O = 1-hexadecanoyl-sn-glycero-3-phospho-(1'-sn-glycerol) + (9Z)-octadecenoate + H(+). It catalyses the reaction a 1,2-diacyl-sn-glycero-3-phospho-(1'-sn-glycerol) + H2O = 2-acyl-sn-glycero-3-phospho-(1'-sn-glycerol) + a fatty acid + H(+). It carries out the reaction 1-hexadecanoyl-2-(9Z-octadecenoyl)-sn-glycero-3-phospho-(1'-sn-glycerol) + H2O = 2-(9Z-octadecenoyl)-sn-glycero-3-phospho-(1'-sn-glycerol) + hexadecanoate + H(+). With respect to regulation, transacylase activity is completely inhibited by Triton X-100 and partially inhibited by heparin. Moderately activated by Mg(2+) and Ca(2+). Functionally, has dual calcium-independent phospholipase and O-acyltransferase activities with a potential role in glycerophospholipid homeostasis and remodeling of acyl groups of lipophilic alcohols present in acidic cellular compartments. Catalyzes hydrolysis of the ester bond of the fatty acyl group attached at sn-1 or sn-2 position of phospholipids (phospholipase A1 or A2 activity) and transfer it to the hydroxyl group at the first carbon of lipophilic alcohols (O-acyltransferase activity). Among preferred fatty acyl donors are phosphatidylcholines, phosphatidylethanolamines, phosphatidylglycerols and phosphatidylserines. Favors sn-2 over sn-1 deacylation of unsaturated fatty acyl groups of phosphatidylcholines, phosphatidylethanolamines, and phosphatidylglycerols. Among preferred fatty acyl acceptors are natural lipophilic alcohols including short-chain ceramide N-acetyl-sphingosine (C2 ceramide), alkylacylglycerols, monoacylglycerols, and acylethanolamides such as anandamide and oleoylethanolamide. Selectively hydrolyzes the sn-1 fatty acyl group of truncated oxidized phospholipids and may play a role in detoxification of reactive oxidized phospholipids during oxidative stress. Required for normal phospholipid degradation in alveolar macrophages with potential implications in the clearance of pulmonary surfactant, which is mainly composed of dipalmitoylphosphatidylcholine (1,2-dihexadecanoyl-sn-glycero-3-phosphocholine). Involved in the first step of bis(monoacylglycero)phosphate (BMP) de novo synthesis from phosphatidylglycerol (1,2-diacyl-sn-glycero-3-phospho-(1'-sn-glycerol), PG). BMP is an important player in cargo sorting and degradation, regulation of cellular cholesterol levels and intercellular communication. At neutral pH, hydrolyzes the sn-1 fatty acyl group of the lysophosphatidylcholines. The chain is Lysosomal phospholipase A and acyltransferase (PLA2G15) from Bos taurus (Bovine).